A 314-amino-acid chain; its full sequence is Ribosomal protein uL3 glutamine methyltransferase (314 aa).

The protein belongs to the protein N5-glutamine methyltransferase family. PrmB subfamily.

It carries out the reaction L-glutaminyl-[ribosomal protein uL3] + S-adenosyl-L-methionine = N(5)-methyl-L-glutaminyl-[ribosomal protein uL3] + S-adenosyl-L-homocysteine + H(+). Functionally, methylates large ribosomal subunit protein uL3 on a specific glutamine residue. This is Ribosomal protein uL3 glutamine methyltransferase from Vibrio cholerae serotype O1 (strain ATCC 39315 / El Tor Inaba N16961).